The sequence spans 338 residues: RNA 3'-terminal phosphate cyclase (338 aa).

ATP-binding positions include Gln-103 and 283 to 287; that span reads YLADQ. Catalysis depends on His-308, which acts as the Tele-AMP-histidine intermediate.

It belongs to the RNA 3'-terminal cyclase family. Type 1 subfamily.

Its subcellular location is the cytoplasm. It catalyses the reaction a 3'-end 3'-phospho-ribonucleotide-RNA + ATP = a 3'-end 2',3'-cyclophospho-ribonucleotide-RNA + AMP + diphosphate. In terms of biological role, catalyzes the conversion of 3'-phosphate to a 2',3'-cyclic phosphodiester at the end of RNA. The mechanism of action of the enzyme occurs in 3 steps: (A) adenylation of the enzyme by ATP; (B) transfer of adenylate to an RNA-N3'P to produce RNA-N3'PP5'A; (C) and attack of the adjacent 2'-hydroxyl on the 3'-phosphorus in the diester linkage to produce the cyclic end product. The biological role of this enzyme is unknown but it is likely to function in some aspects of cellular RNA processing. The chain is RNA 3'-terminal phosphate cyclase from Escherichia coli O6:K15:H31 (strain 536 / UPEC).